The primary structure comprises 203 residues: E3 ubiquitin-protein ligase rnf152-B (203 aa).

Residues 12-55 form an RING-type zinc finger; it reads CQICFNYYSPRRRPKLLDCKHTCCSVCLQQMRASQKDLRCPWCR. The chain crosses the membrane as a helical span at residues 167 to 187; that stretch reads SGVCTVILVACVLVFLLGIVL.

Belongs to the RNF152 family.

It localises to the lysosome membrane. It catalyses the reaction S-ubiquitinyl-[E2 ubiquitin-conjugating enzyme]-L-cysteine + [acceptor protein]-L-lysine = [E2 ubiquitin-conjugating enzyme]-L-cysteine + N(6)-ubiquitinyl-[acceptor protein]-L-lysine.. It functions in the pathway protein modification; protein ubiquitination. E3 ubiquitin-protein ligase that acts as a negative regulator of mTORC1 signaling by mediating ubiquitination of RagA/RRAGA and RHEB. Catalyzes 'Lys-63'-linked polyubiquitination of RagA/RRAGA in response to amino acid starvation, thereby regulating mTORC1 signaling. Also mediates monoubiquitination of RHEB, promoting its association with the TSC-TBC complex and subsequent inhibition. Also mediates 'Lys-48'-linked polyubiquitination of target proteins and their subsequent targeting to the proteasome for degradation. The protein is E3 ubiquitin-protein ligase rnf152-B of Xenopus laevis (African clawed frog).